The chain runs to 87 residues: Toxin Cll5b (87 aa).

The N-terminal stretch at 1–19 (MNSLLMITACLAEIGTVWA) is a signal peptide. The LCN-type CS-alpha/beta domain maps to 20-85 (KEGYLVNKST…TYPLPNKSCS (66 aa)). 4 cysteine pairs are disulfide-bonded: cysteine 31-cysteine 84, cysteine 35-cysteine 60, cysteine 44-cysteine 65, and cysteine 48-cysteine 67. The propeptide at 86 to 87 (KK) is removed by a carboxypeptidase.

This sequence belongs to the long (4 C-C) scorpion toxin superfamily. Sodium channel inhibitor family. Beta subfamily. In terms of tissue distribution, expressed by the venom gland.

The protein resides in the secreted. In terms of biological role, beta toxins bind voltage-independently at site-4 of sodium channels (Nav) and shift the voltage of activation toward more negative potentials thereby affecting sodium channel activation and promoting spontaneous and repetitive firing. This is Toxin Cll5b from Centruroides limpidus (Mexican scorpion).